An 847-amino-acid chain; its full sequence is Protein SEY1 (847 aa).

Topologically, residues 1-720 (MSSGEPLSET…KRSIVQHVTQ (720 aa)) are cytoplasmic. Residues 55–290 (GHNYHIVAVF…VENDIFKPEY (236 aa)) enclose the GB1/RHD3-type G domain. A GTP-binding site is contributed by 65-72 (GSQSTGKS). Residues 721-741 (IPYYIYIIILLLGWNEFMAVV) form a helical membrane-spanning segment. At 742–744 (RNP) the chain is on the lumenal side. A helical transmembrane segment spans residues 745–765 (FTFSLAIILGASLYILYTMNL). Over 766 to 847 (LKPALTVTQR…VTSLNVVEEE (82 aa)) the chain is Cytoplasmic.

This sequence belongs to the TRAFAC class dynamin-like GTPase superfamily. GB1/RHD3 GTPase family. RHD3 subfamily.

Its subcellular location is the endoplasmic reticulum membrane. Cooperates with the reticulon proteins and tubule-shaping DP1 family proteins to generate and maintain the structure of the tubular endoplasmic reticulum network. Has GTPase activity, which is required for its function in ER organization. In Lodderomyces elongisporus (strain ATCC 11503 / CBS 2605 / JCM 1781 / NBRC 1676 / NRRL YB-4239) (Yeast), this protein is Protein SEY1.